We begin with the raw amino-acid sequence, 323 residues long: MVFKINLPPEGLFARSLVISELLGLNNVGISIDNDVVNIERKEEFKDNLKNELSQFKLVFNKLKTYKKNYANEVNLAEKVFNGDVEEFFKEDKEEYFLPLIFPEIMEAEKWFGGWSGSGKGSKRTIGVNRQSFILSLLSLGKYQLVSYRAAKEQVTVLALVDTTVMSDMCKPSKKKELRVQSNLIAQLSHISRLLIFSTILDEQGCQEVLLLKEGTHRAEIYERNSHTSLRPLIRFWTLVDDDSVERRITSLANQSPDSLNKVSNYIFEGIRGTLSPVEVAYMIARETYLKEEQSPLTSWDVKKIREALERMRVEMEEVYSST.

Sometimes seen associated with the aCascade ribonucleoprotein complex, minimally composed of Csa2 and Cas5a, which binds crRNA. Other probable components of aCascade in strain P1 are Cas6 and Csa5, while SSO1399, Cas5b (SSO1400) and SSO1401 have sometimes been seen weakly associated. The Csa2-Cas5a-crRNA complex also binds target DNA homologous to crRNA, probably forming an R-loop. Purified aCascade forms a filament about 6 nm in width.

Its function is as follows. CRISPR (clustered regularly interspaced short palindromic repeat) is an adaptive immune system that provides protection against mobile genetic elements (viruses, transposable elements and conjugative plasmids). CRISPR clusters contain spacers, sequences complementary to antecedent mobile elements, and target invading nucleic acids. CRISPR clusters are transcribed and processed into CRISPR RNA (crRNA). This Saccharolobus solfataricus (strain ATCC 35092 / DSM 1617 / JCM 11322 / P2) (Sulfolobus solfataricus) protein is Putative CRISPR-associated protein SSO1401.